Consider the following 317-residue polypeptide: Melanocyte-stimulating hormone receptor (317 aa).

At 1–37 (MPAQGSQRGLLGAVNFTPTATPHLRPAANQTGPQCLE) the chain is on the extracellular side. Residue Asn29 is glycosylated (N-linked (GlcNAc...) asparagine). The chain crosses the membrane as a helical span at residues 38–63 (VSVPDGLFLCLGLVSLVENTLVVAAI). The Cytoplasmic portion of the chain corresponds to 64–72 (AKNRNLHSP). A helical membrane pass occupies residues 73–93 (MYCFICCLALSDLLVSVSNLL). The Extracellular portion of the chain corresponds to 94–118 (ETAVLLLLEVGALAAQATVVQQLGN). The helical transmembrane segment at 119–140 (VIDVLICSSMVSSLCSLGAIAM) threads the bilayer. The Cytoplasmic segment spans residues 141-163 (DRYISIFYALRYHSIVTLARARR). A helical membrane pass occupies residues 164–183 (AIAAVWAASILSSTLFITYY). The Extracellular segment spans residues 184–191 (DRTAALLC). The chain crosses the membrane as a helical span at residues 192 to 211 (LVVFFLAMLVLMALLYVHML). Residues 212-240 (IQACQHAQAIARLHKRQHPVQQGWGLKGA) lie on the Cytoplasmic side of the membrane. A helical membrane pass occupies residues 241–266 (ATLTILLGVFFLCWGPFFLHLTLIAV). Residues 267-279 (CPQHPTCSCIFKN) are Extracellular-facing. The helical transmembrane segment at 280–300 (FRLFLALIICNTIVDPLIYAF) threads the bilayer. Topologically, residues 301–317 (RSQELRRTLKEVLLFSW) are cytoplasmic.

Belongs to the G-protein coupled receptor 1 family. In terms of assembly, interacts with MGRN1, but does not undergo MGRN1-mediated ubiquitination; this interaction competes with GNAS-binding and thus inhibits agonist-induced cAMP production. Interacts with OPN3; the interaction results in a decrease in MC1R-mediated cAMP signaling and ultimately a decrease in melanin production in melanocytes.

Its subcellular location is the cell membrane. Functionally, receptor for MSH (alpha, beta and gamma) and ACTH. The activity of this receptor is mediated by G proteins which activate adenylate cyclase. Mediates melanogenesis, the production of eumelanin (black/brown) and phaeomelanin (red/yellow), via regulation of cAMP signaling in melanocytes. The chain is Melanocyte-stimulating hormone receptor (MC1R) from Eulemur fulvus fulvus (Brown lemur).